Reading from the N-terminus, the 375-residue chain is Pectate lyase 1 (375 aa).

Residues 1 to 21 (MASCTLLAVLVFLCAIVSCFS) form the signal peptide. A disulfide bond links Cys-28 and Cys-45. N-linked (GlcNAc...) asparagine glycosylation is present at Asn-110. The cysteines at positions 128 and 147 are disulfide-linked. Asn-148 carries N-linked (GlcNAc...) asparagine glycosylation. Asp-170 provides a ligand contact to Ca(2+). Asn-178 is a glycosylation site (N-linked (GlcNAc...) asparagine). Ca(2+) is bound by residues Asp-194 and Asp-198. Residue Arg-250 is part of the active site. An N-linked (GlcNAc...) asparagine glycan is attached at Asn-293. Cys-306 and Cys-312 form a disulfide bridge. N-linked (GlcNAc...) asparagine glycosylation occurs at Asn-352.

The protein belongs to the polysaccharide lyase 1 family. Amb a subfamily. Ca(2+) serves as cofactor.

The enzyme catalyses Eliminative cleavage of (1-&gt;4)-alpha-D-galacturonan to give oligosaccharides with 4-deoxy-alpha-D-galact-4-enuronosyl groups at their non-reducing ends.. Its pathway is glycan metabolism; pectin degradation; 2-dehydro-3-deoxy-D-gluconate from pectin: step 2/5. Functionally, has pectate lyase activity. The polypeptide is Pectate lyase 1 (Chamaecyparis obtusa (Hinoki false-cypress)).